Reading from the N-terminus, the 357-residue chain is Probable cinnamyl alcohol dehydrogenase 2 (357 aa).

Cys47 lines the Zn(2+) pocket. Ser49 contacts NADP(+). His69, Glu70, Cys100, Cys103, Cys106, Cys114, and Cys163 together coordinate Zn(2+). NADP(+)-binding positions include Thr167, 188 to 193 (GLGGVG), 211 to 216 (SSSDKK), Thr251, Gly275, and 298 to 300 (SFI).

The protein belongs to the zinc-containing alcohol dehydrogenase family. As to quaternary structure, homodimer. Requires Zn(2+) as cofactor.

The enzyme catalyses (E)-cinnamyl alcohol + NADP(+) = (E)-cinnamaldehyde + NADPH + H(+). The catalysed reaction is (E)-coniferol + NADP(+) = (E)-coniferaldehyde + NADPH + H(+). It carries out the reaction (E)-sinapyl alcohol + NADP(+) = (E)-sinapaldehyde + NADPH + H(+). It catalyses the reaction (E)-4-coumaroyl alcohol + NADP(+) = (E)-4-coumaraldehyde + NADPH + H(+). The enzyme catalyses (E)-caffeyl alcohol + NADP(+) = (E)-caffeyl aldehyde + NADPH + H(+). It participates in aromatic compound metabolism; phenylpropanoid biosynthesis. In terms of biological role, involved in lignin biosynthesis. Catalyzes the final step specific for the production of lignin monomers. Catalyzes the NADPH-dependent reduction of coniferaldehyde, 5-hydroxyconiferaldehyde, sinapaldehyde, 4-coumaraldehyde and caffeyl aldehyde to their respective alcohols. This is Probable cinnamyl alcohol dehydrogenase 2 (CAD2) from Picea abies (Norway spruce).